Here is a 176-residue protein sequence, read N- to C-terminus: Peptide methionine sulfoxide reductase MsrA (176 aa).

Residue Cys-10 is part of the active site.

Belongs to the MsrA Met sulfoxide reductase family.

It carries out the reaction L-methionyl-[protein] + [thioredoxin]-disulfide + H2O = L-methionyl-(S)-S-oxide-[protein] + [thioredoxin]-dithiol. It catalyses the reaction [thioredoxin]-disulfide + L-methionine + H2O = L-methionine (S)-S-oxide + [thioredoxin]-dithiol. Functionally, has an important function as a repair enzyme for proteins that have been inactivated by oxidation. Catalyzes the reversible oxidation-reduction of methionine sulfoxide in proteins to methionine. The protein is Peptide methionine sulfoxide reductase MsrA of Leptospira borgpetersenii serovar Hardjo-bovis (strain JB197).